The sequence spans 903 residues: Translation initiation factor IF-2 (903 aa).

Disordered stretches follow at residues 57 to 171 (EKFK…QRRR) and 267 to 318 (PTPQ…EAVT). The segment covering 69–163 (KKEAKEPSEK…SEPQKPKESL (95 aa)) has biased composition (basic and acidic residues). Positions 267 to 278 (PTPQPMQKTKQP) are enriched in low complexity. The segment covering 299–308 (RRARKKHKKP) has biased composition (basic residues). The 168-residue stretch at 402–569 (PRAPVITIMG…IVLLQAEILE (168 aa)) folds into the tr-type G domain. The segment at 411–418 (GHVDHGKT) is G1. 411-418 (GHVDHGKT) lines the GTP pocket. The segment at 436-440 (GITQH) is G2. The G3 stretch occupies residues 457–460 (DTPG). GTP contacts are provided by residues 457-461 (DTPGH) and 511-514 (NKMD). A G4 region spans residues 511 to 514 (NKMD). The G5 stretch occupies residues 547 to 549 (SAK).

It belongs to the TRAFAC class translation factor GTPase superfamily. Classic translation factor GTPase family. IF-2 subfamily.

The protein resides in the cytoplasm. One of the essential components for the initiation of protein synthesis. Protects formylmethionyl-tRNA from spontaneous hydrolysis and promotes its binding to the 30S ribosomal subunits. Also involved in the hydrolysis of GTP during the formation of the 70S ribosomal complex. This is Translation initiation factor IF-2 from Campylobacter curvus (strain 525.92).